A 403-amino-acid polypeptide reads, in one-letter code: MADPKYADLPGIARNEPDVYETSDLPEDDQAEFDAEELTSTSVEHIIVNPNAAYDKFKDKKVGTRSLDFSDRITKSKRTGYESGEYEILGEGIGMKETPQQKYQRLLHEVQELTQEVEKTQSTVKESAAEEKLTPVALAKQVASLKQQLVSTHLEKLLGPDAAINLTDPDGALAKRLLTQLDAAKTRKNPEGKSPAKGPGPDTENLVTYELHCRPEQNKFSQAAKMAELEKRLGELEVAVRCDQDTQNPLTVGLQGSCLMDTVEILQAKVNLLDVASLDQVEARLQSVLGKMNEIAKHKAAIEDADTESKVHQLYETVQKWDSMSGTLPQVVQRLLTLKQLHEQAMQFGQLLTHLDTTQQMIANSLKDNTNALAMVQKAMKENLATVEDNFSNIDGRIKKLSK.

Residues 1–26 (MADPKYADLPGIARNEPDVYETSDLP) are disordered. The stretch at 99 to 132 (PQQKYQRLLHEVQELTQEVEKTQSTVKESAAEEK) forms a coiled coil. The segment at 183-203 (AAKTRKNPEGKSPAKGPGPDT) is disordered. Positions 381–401 (KENLATVEDNFSNIDGRIKKL) form a coiled coil.

Belongs to the dynactin subunit 2 family. In terms of assembly, subunit of dynactin, a multiprotein complex part of a tripartite complex with dynein and a adapter, such as BICDL1, BICD2 or HOOK3. The dynactin complex is built around ACTR1A/ACTB filament and consists of an actin-related filament composed of a shoulder domain, a pointed end and a barbed end. Its length is defined by its flexible shoulder domain. The soulder is composed of 2 DCTN1 subunits, 4 DCTN2 and 2 DCTN3.

The protein localises to the cytoplasm. It localises to the cytoskeleton. It is found in the microtubule organizing center. Its subcellular location is the centrosome. The protein resides in the membrane. Part of the dynactin complex that activates the molecular motor dynein for ultra-processive transport along microtubules. In the dynactin soulder domain, binds the ACTR1A filament and acts as a molecular ruler to determine the length. Modulates cytoplasmic dynein binding to an organelle, and plays a role in prometaphase chromosome alignment and spindle organization during mitosis. Involved in anchoring microtubules to centrosomes. This chain is Dynactin subunit 2-A (dctn2-a), found in Xenopus laevis (African clawed frog).